A 194-amino-acid polypeptide reads, in one-letter code: ATP synthase subunit delta (194 aa).

This sequence belongs to the ATPase delta chain family. As to quaternary structure, F-type ATPases have 2 components, F(1) - the catalytic core - and F(0) - the membrane proton channel. F(1) has five subunits: alpha(3), beta(3), gamma(1), delta(1), epsilon(1). F(0) has three main subunits: a(1), b(2) and c(10-14). The alpha and beta chains form an alternating ring which encloses part of the gamma chain. F(1) is attached to F(0) by a central stalk formed by the gamma and epsilon chains, while a peripheral stalk is formed by the delta and b chains.

It is found in the cell inner membrane. F(1)F(0) ATP synthase produces ATP from ADP in the presence of a proton or sodium gradient. F-type ATPases consist of two structural domains, F(1) containing the extramembraneous catalytic core and F(0) containing the membrane proton channel, linked together by a central stalk and a peripheral stalk. During catalysis, ATP synthesis in the catalytic domain of F(1) is coupled via a rotary mechanism of the central stalk subunits to proton translocation. In terms of biological role, this protein is part of the stalk that links CF(0) to CF(1). It either transmits conformational changes from CF(0) to CF(1) or is implicated in proton conduction. In Parvibaculum lavamentivorans (strain DS-1 / DSM 13023 / NCIMB 13966), this protein is ATP synthase subunit delta.